The sequence spans 390 residues: Acetylornithine aminotransferase (390 aa).

Pyridoxal 5'-phosphate is bound by residues 105–106 and F132; that span reads GA. A N(2)-acetyl-L-ornithine-binding site is contributed by R135. 217–220 lines the pyridoxal 5'-phosphate pocket; sequence DEVQ. The residue at position 246 (K246) is an N6-(pyridoxal phosphate)lysine. S274 contributes to the N(2)-acetyl-L-ornithine binding site. A pyridoxal 5'-phosphate-binding site is contributed by T275.

This sequence belongs to the class-III pyridoxal-phosphate-dependent aminotransferase family. ArgD subfamily. Homodimer. Pyridoxal 5'-phosphate is required as a cofactor.

Its subcellular location is the cytoplasm. It catalyses the reaction N(2)-acetyl-L-ornithine + 2-oxoglutarate = N-acetyl-L-glutamate 5-semialdehyde + L-glutamate. It participates in amino-acid biosynthesis; L-arginine biosynthesis; N(2)-acetyl-L-ornithine from L-glutamate: step 4/4. This chain is Acetylornithine aminotransferase, found in Methanothermobacter thermautotrophicus (strain ATCC 29096 / DSM 1053 / JCM 10044 / NBRC 100330 / Delta H) (Methanobacterium thermoautotrophicum).